The sequence spans 261 residues: Cytochrome c oxidase subunit 3 (261 aa).

The Mitochondrial matrix segment spans residues 1 to 15; the sequence is MAHQAHAYHMVDPSP. Residues 16 to 34 form a helical membrane-spanning segment; the sequence is WPLTGAVAALLMTSGLAVW. Residues 35–40 are Mitochondrial intermembrane-facing; the sequence is FHFHSM. Residues 41 to 66 traverse the membrane as a helical segment; sequence YLLYLGLTLLLLTMVQWWRDIIREGT. Topologically, residues 67-72 are mitochondrial matrix; sequence FQGHHT. A helical membrane pass occupies residues 73–105; that stretch reads PPVQKGLRYGMILFITSEVFFFLGFFWAFYHSS. The Mitochondrial intermembrane portion of the chain corresponds to 106 to 128; the sequence is LAPTPELGGCWPPTGIYPLDPFE. A helical membrane pass occupies residues 129-152; sequence VPLLNTAVLLASGVTVTWAHHSLM. Over 153–155 the chain is Mitochondrial matrix; sequence EGN. A helical transmembrane segment spans residues 156-183; sequence RKEAIQALTLTVLLGFYFTALQAMEYYE. Residues 184 to 190 are Mitochondrial intermembrane-facing; that stretch reads APFTIAD. Residues 191–223 form a helical membrane-spanning segment; it reads GVYGSTFFVATGFHGLHVIIGSTFLMVCLLRQI. Residues 224–232 are Mitochondrial matrix-facing; the sequence is QYHFTSEHH. Residues 233–256 traverse the membrane as a helical segment; that stretch reads FGFERAAWYWHFVDVVWLFLYVSI. Over 257–261 the chain is Mitochondrial intermembrane; it reads YWWGS.

This sequence belongs to the cytochrome c oxidase subunit 3 family. In terms of assembly, component of the cytochrome c oxidase (complex IV, CIV), a multisubunit enzyme composed of 14 subunits. The complex is composed of a catalytic core of 3 subunits MT-CO1, MT-CO2 and MT-CO3, encoded in the mitochondrial DNA, and 11 supernumerary subunits COX4I, COX5A, COX5B, COX6A, COX6B, COX6C, COX7A, COX7B, COX7C, COX8 and NDUFA4, which are encoded in the nuclear genome. The complex exists as a monomer or a dimer and forms supercomplexes (SCs) in the inner mitochondrial membrane with NADH-ubiquinone oxidoreductase (complex I, CI) and ubiquinol-cytochrome c oxidoreductase (cytochrome b-c1 complex, complex III, CIII), resulting in different assemblies (supercomplex SCI(1)III(2)IV(1) and megacomplex MCI(2)III(2)IV(2)).

Its subcellular location is the mitochondrion inner membrane. It catalyses the reaction 4 Fe(II)-[cytochrome c] + O2 + 8 H(+)(in) = 4 Fe(III)-[cytochrome c] + 2 H2O + 4 H(+)(out). Functionally, component of the cytochrome c oxidase, the last enzyme in the mitochondrial electron transport chain which drives oxidative phosphorylation. The respiratory chain contains 3 multisubunit complexes succinate dehydrogenase (complex II, CII), ubiquinol-cytochrome c oxidoreductase (cytochrome b-c1 complex, complex III, CIII) and cytochrome c oxidase (complex IV, CIV), that cooperate to transfer electrons derived from NADH and succinate to molecular oxygen, creating an electrochemical gradient over the inner membrane that drives transmembrane transport and the ATP synthase. Cytochrome c oxidase is the component of the respiratory chain that catalyzes the reduction of oxygen to water. Electrons originating from reduced cytochrome c in the intermembrane space (IMS) are transferred via the dinuclear copper A center (CU(A)) of subunit 2 and heme A of subunit 1 to the active site in subunit 1, a binuclear center (BNC) formed by heme A3 and copper B (CU(B)). The BNC reduces molecular oxygen to 2 water molecules using 4 electrons from cytochrome c in the IMS and 4 protons from the mitochondrial matrix. The sequence is that of Cytochrome c oxidase subunit 3 (MT-CO3) from Squalus acanthias (Spiny dogfish).